Reading from the N-terminus, the 490-residue chain is Aspartyl/glutamyl-tRNA(Asn/Gln) amidotransferase subunit B (490 aa).

It belongs to the GatB/GatE family. GatB subfamily. Heterotrimer of A, B and C subunits.

The enzyme catalyses L-glutamyl-tRNA(Gln) + L-glutamine + ATP + H2O = L-glutaminyl-tRNA(Gln) + L-glutamate + ADP + phosphate + H(+). It carries out the reaction L-aspartyl-tRNA(Asn) + L-glutamine + ATP + H2O = L-asparaginyl-tRNA(Asn) + L-glutamate + ADP + phosphate + 2 H(+). In terms of biological role, allows the formation of correctly charged Asn-tRNA(Asn) or Gln-tRNA(Gln) through the transamidation of misacylated Asp-tRNA(Asn) or Glu-tRNA(Gln) in organisms which lack either or both of asparaginyl-tRNA or glutaminyl-tRNA synthetases. The reaction takes place in the presence of glutamine and ATP through an activated phospho-Asp-tRNA(Asn) or phospho-Glu-tRNA(Gln). The sequence is that of Aspartyl/glutamyl-tRNA(Asn/Gln) amidotransferase subunit B from Methylorubrum extorquens (strain PA1) (Methylobacterium extorquens).